A 241-amino-acid polypeptide reads, in one-letter code: Ribose-5-phosphate isomerase A (241 aa).

Residues 28-31 (TGST), 83-86 (DGAD), and 96-99 (KGGG) contribute to the substrate site. Catalysis depends on glutamate 105, which acts as the Proton acceptor. Substrate is bound at residue lysine 123.

Belongs to the ribose 5-phosphate isomerase family. As to quaternary structure, homodimer.

The enzyme catalyses aldehydo-D-ribose 5-phosphate = D-ribulose 5-phosphate. It functions in the pathway carbohydrate degradation; pentose phosphate pathway; D-ribose 5-phosphate from D-ribulose 5-phosphate (non-oxidative stage): step 1/1. Its function is as follows. Catalyzes the reversible conversion of ribose-5-phosphate to ribulose 5-phosphate. The protein is Ribose-5-phosphate isomerase A of Bradyrhizobium diazoefficiens (strain JCM 10833 / BCRC 13528 / IAM 13628 / NBRC 14792 / USDA 110).